We begin with the raw amino-acid sequence, 77 residues long: Early E3 9.0 kDa glycoprotein (77 aa).

N-linked (GlcNAc...) asparagine; by host glycosylation is present at asparagine 7. The chain crosses the membrane as a helical span at residues 27 to 47; sequence ITILIVIGILILSVILYFIFC.

Belongs to the adenoviridae E3A-1 family.

Its subcellular location is the host nucleus membrane. In Human adenovirus B serotype 3 (HAdV-3), this protein is Early E3 9.0 kDa glycoprotein.